A 339-amino-acid polypeptide reads, in one-letter code: Phosphate acyltransferase (339 aa).

The protein belongs to the PlsX family. Homodimer. Probably interacts with PlsY.

The protein resides in the cytoplasm. The enzyme catalyses a fatty acyl-[ACP] + phosphate = an acyl phosphate + holo-[ACP]. The protein operates within lipid metabolism; phospholipid metabolism. Catalyzes the reversible formation of acyl-phosphate (acyl-PO(4)) from acyl-[acyl-carrier-protein] (acyl-ACP). This enzyme utilizes acyl-ACP as fatty acyl donor, but not acyl-CoA. The chain is Phosphate acyltransferase from Clostridium perfringens (strain ATCC 13124 / DSM 756 / JCM 1290 / NCIMB 6125 / NCTC 8237 / Type A).